Here is a 434-residue protein sequence, read N- to C-terminus: Serine--tRNA ligase (434 aa).

241 to 243 lines the L-serine pocket; that stretch reads TAE. 272-274 lines the ATP pocket; sequence RSE. An L-serine-binding site is contributed by Glu295. An ATP-binding site is contributed by 359-362; that stretch reads EISS. Position 395 (Ser395) interacts with L-serine.

It belongs to the class-II aminoacyl-tRNA synthetase family. Type-1 seryl-tRNA synthetase subfamily. As to quaternary structure, homodimer. The tRNA molecule binds across the dimer.

The protein resides in the cytoplasm. The catalysed reaction is tRNA(Ser) + L-serine + ATP = L-seryl-tRNA(Ser) + AMP + diphosphate + H(+). It carries out the reaction tRNA(Sec) + L-serine + ATP = L-seryl-tRNA(Sec) + AMP + diphosphate + H(+). The protein operates within aminoacyl-tRNA biosynthesis; selenocysteinyl-tRNA(Sec) biosynthesis; L-seryl-tRNA(Sec) from L-serine and tRNA(Sec): step 1/1. Its function is as follows. Catalyzes the attachment of serine to tRNA(Ser). Is also able to aminoacylate tRNA(Sec) with serine, to form the misacylated tRNA L-seryl-tRNA(Sec), which will be further converted into selenocysteinyl-tRNA(Sec). In Glaesserella parasuis serovar 5 (strain SH0165) (Haemophilus parasuis), this protein is Serine--tRNA ligase.